Reading from the N-terminus, the 393-residue chain is METVLNHPLFMPVLVTLVIIAAFPLVAGYIVLVERKVLADFQVRLGPMRCGPHGLLQPIADALKLLLKEDIIPTDSDKAIFWFAPCISTITGLVAFAVIPFARKIYVADVNVGLLVISATSAVGILGIILGGWSSNSHYSLLGALRSAAQLVSYEVALAFALLSGVMVAGTLSMQGIVQSQADRGVWGIFANYGFMVVPFVLYIIAATAETNRAPFDLPEAESELVAGFHTEYSGFRWALYFLAEYANIFVISSVAVTLFWGGWLRPFSSVAWLEKPLNYGVPVILFVGSGLLTFTLIRKVVDPMQQKVLLGVVVLLVLIGAIMAIPMVNDAMIGLFWFLVKVSVIIYTMIWFRGTFPRYRYDQLMNIGWKIAIPVGMASVMVNAVLGMLGKH.

10 helical membrane-spanning segments follow: residues 13 to 33 (VLVT…IVLV), 79 to 99 (AIFW…FAVI), 112 to 132 (VGLL…ILGG), 158 to 178 (LAFA…QGIV), 186 to 206 (VWGI…YIIA), 240 to 260 (LYFL…VTLF), 278 to 298 (LNYG…FTLI), 309 to 329 (VLLG…IPMV), 333 to 353 (MIGL…MIWF), and 368 to 388 (IGWK…AVLG).

It belongs to the complex I subunit 1 family. As to quaternary structure, NDH-1 is composed of 14 different subunits. Subunits NuoA, H, J, K, L, M, N constitute the membrane sector of the complex.

The protein resides in the cell inner membrane. It catalyses the reaction a quinone + NADH + 5 H(+)(in) = a quinol + NAD(+) + 4 H(+)(out). Functionally, NDH-1 shuttles electrons from NADH, via FMN and iron-sulfur (Fe-S) centers, to quinones in the respiratory chain. The immediate electron acceptor for the enzyme in this species is believed to be ubiquinone. Couples the redox reaction to proton translocation (for every two electrons transferred, four hydrogen ions are translocated across the cytoplasmic membrane), and thus conserves the redox energy in a proton gradient. This subunit may bind ubiquinone. The sequence is that of NADH-quinone oxidoreductase subunit H 2 from Solibacter usitatus (strain Ellin6076).